The sequence spans 366 residues: Beta sliding clamp (366 aa).

It belongs to the beta sliding clamp family. As to quaternary structure, forms a ring-shaped head-to-tail homodimer around DNA which binds and tethers DNA polymerases and other proteins to the DNA. The DNA replisome complex has a single clamp-loading complex (3 tau and 1 each of delta, delta', psi and chi subunits) which binds 3 Pol III cores (1 core on the leading strand and 2 on the lagging strand) each with a beta sliding clamp dimer. Additional proteins in the replisome are other copies of gamma, psi and chi, Ssb, DNA helicase and RNA primase.

It localises to the cytoplasm. Confers DNA tethering and processivity to DNA polymerases and other proteins. Acts as a clamp, forming a ring around DNA (a reaction catalyzed by the clamp-loading complex) which diffuses in an ATP-independent manner freely and bidirectionally along dsDNA. Initially characterized for its ability to contact the catalytic subunit of DNA polymerase III (Pol III), a complex, multichain enzyme responsible for most of the replicative synthesis in bacteria; Pol III exhibits 3'-5' exonuclease proofreading activity. The beta chain is required for initiation of replication as well as for processivity of DNA replication. The chain is Beta sliding clamp (dnaN) from Chlamydia pneumoniae (Chlamydophila pneumoniae).